The following is a 692-amino-acid chain: UvrABC system protein B (692 aa).

Residues 32 to 418 form the Helicase ATP-binding domain; sequence DNIENGEKAQ…QTDTIVEQII (387 aa). 45-52 contributes to the ATP binding site; the sequence is GATGTGKT. Residues 98 to 121 carry the Beta-hairpin motif; that stretch reads YYDYYQPEAYVPSSDTYIEKDSSV. The region spanning 436–631 is the Helicase C-terminal domain; it reads QIDDLVGEIH…TIKKEIRDLI (196 aa). Residues 656 to 691 enclose the UVR domain; that stretch reads KALVKKLEKEMQQAASALDFEGAAQLRDMVLELRAM.

This sequence belongs to the UvrB family. As to quaternary structure, forms a heterotetramer with UvrA during the search for lesions. Interacts with UvrC in an incision complex.

The protein resides in the cytoplasm. Its function is as follows. The UvrABC repair system catalyzes the recognition and processing of DNA lesions. A damage recognition complex composed of 2 UvrA and 2 UvrB subunits scans DNA for abnormalities. Upon binding of the UvrA(2)B(2) complex to a putative damaged site, the DNA wraps around one UvrB monomer. DNA wrap is dependent on ATP binding by UvrB and probably causes local melting of the DNA helix, facilitating insertion of UvrB beta-hairpin between the DNA strands. Then UvrB probes one DNA strand for the presence of a lesion. If a lesion is found the UvrA subunits dissociate and the UvrB-DNA preincision complex is formed. This complex is subsequently bound by UvrC and the second UvrB is released. If no lesion is found, the DNA wraps around the other UvrB subunit that will check the other stand for damage. This chain is UvrABC system protein B, found in Lactococcus lactis subsp. lactis (strain IL1403) (Streptococcus lactis).